The sequence spans 89 residues: Small ribosomal subunit protein uS14 (89 aa).

Belongs to the universal ribosomal protein uS14 family. As to quaternary structure, part of the 30S ribosomal subunit. Contacts proteins S3 and S10.

Functionally, binds 16S rRNA, required for the assembly of 30S particles and may also be responsible for determining the conformation of the 16S rRNA at the A site. This chain is Small ribosomal subunit protein uS14, found in Lacticaseibacillus casei (strain BL23) (Lactobacillus casei).